Consider the following 213-residue polypeptide: Chloramphenicol acetyltransferase 2 (213 aa).

The active-site Proton acceptor is His189.

The protein belongs to the chloramphenicol acetyltransferase family. In terms of assembly, homotrimer.

It catalyses the reaction chloramphenicol + acetyl-CoA = chloramphenicol 3-acetate + CoA. Its function is as follows. This enzyme is an effector of chloramphenicol resistance in bacteria. This Haemophilus influenzae protein is Chloramphenicol acetyltransferase 2 (cat-IIH).